The chain runs to 333 residues: MICKKASSKWIVLVCLIFILLTAVCASVVYGYTGTSWRQVYQAFTSFNGTNEHVIIKDVRLPRALVATVVGASLAAAGALMQALTKNPLASPGIFGINAGAGFFIVAGSFFLHIQSPQALVWSSFLGAAFTAAIVYAAGSLGREGLTPIKLTLAGAAMAAMFSSLTQGLLSVNELELAQVLFWLTGSVQGRSLDLLMTMFPYAAAALVICFFLGQKINLLVMGEDVAKGLGQKTGLLKFVMALCVVMLAGSAVAIAGPISFIGIIIPHFARFVVGNDYRWVLPFSAVLGAILLVCADIGARYIIMPQEVPVGVMTAIIGMPVFVYIARRGAKL.

An N-terminal signal peptide occupies residues 1–31 (MICKKASSKWIVLVCLIFILLTAVCASVVYG). 8 helical membrane passes run 64 to 84 (ALVATVVGASLAAAGALMQAL), 94 to 114 (IFGINAGAGFFIVAGSFFLHI), 119 to 139 (ALVWSSFLGAAFTAAIVYAAG), 152 to 172 (TLAGAAMAAMFSSLTQGLLSV), 193 to 213 (LDLLMTMFPYAAAALVICFFL), 246 to 266 (VMLAGSAVAIAGPISFIGIII), 280 to 300 (WVLPFSAVLGAILLVCADIGA), and 303 to 323 (IIMPQEVPVGVMTAIIGMPVF).

The protein belongs to the binding-protein-dependent transport system permease family. FecCD subfamily. As to quaternary structure, the complex is composed of one ATP-binding protein (YusV), two transmembrane proteins (YfiZ and YfhA) and a solute-binding protein (YfiY).

The protein resides in the cell membrane. Its function is as follows. Part of the ABC transporter complex YfiYZ/YfhA/YusV involved in import of the iron-hydroxamate siderophores schizokinen, arthrobactin and corprogen. This chain is Probable siderophore transport system permease protein YfiZ (yfiZ), found in Bacillus subtilis (strain 168).